The following is a 565-amino-acid chain: NAD-dependent malic enzyme (565 aa).

Tyrosine 104 functions as the Proton donor in the catalytic mechanism. Arginine 157 contributes to the NAD(+) binding site. The Proton acceptor role is filled by lysine 175. A divalent metal cation contacts are provided by glutamate 246, aspartate 247, and aspartate 270. Residues aspartate 270 and asparagine 418 each coordinate NAD(+).

This sequence belongs to the malic enzymes family. Homotetramer. The cofactor is Mg(2+). Mn(2+) is required as a cofactor.

The catalysed reaction is (S)-malate + NAD(+) = pyruvate + CO2 + NADH. It catalyses the reaction oxaloacetate + H(+) = pyruvate + CO2. This is NAD-dependent malic enzyme from Salmonella arizonae (strain ATCC BAA-731 / CDC346-86 / RSK2980).